A 231-amino-acid chain; its full sequence is 4-aminobenzoate synthase (231 aa).

Fe(2+) contacts are provided by glutamate 81, histidine 88, glutamate 142, histidine 174, aspartate 178, and histidine 181.

This sequence belongs to the CADD family. In terms of assembly, homodimer. During infection, interacts with death domains of mammalian tumor necrosis factor (TNF) family receptors Fas, DR4, DR5 and to some extent TNFR1, but not with the respective downstream adapters. Fe(2+) serves as cofactor. Requires Mn(2+) as cofactor.

The protein resides in the secreted. The protein localises to the host cytoplasm. The protein is a cosubstrate rather than a true enzyme and is left in an inactive state after a single turnover. Inactive under anaerobic conditions. Involved in de novo para-aminobenzoate (PABA) biosynthesis. Acts as a self-sacrificing or 'suicide' enzyme that utilizes its own active site tyrosine residue(s) as the substrate for PABA synthesis. The side chain of the tyrosine residue is released from the protein backbone via cleavage of the C(alpha)-C(beta) bond, leaving a glycine in place of the original tyrosine residue. Reaction requires O(2) and a reduced dimetal cofactor. Functionally, was also identified as a specific toxin that associates with death domains of tumor necrosis factor family (TNF) receptors and induces apoptosis in mammalian cell lines through a Caspase-dependent mechanism. The protein is 4-aminobenzoate synthase of Chlamydia trachomatis serovar D (strain ATCC VR-885 / DSM 19411 / UW-3/Cx).